Here is a 153-residue protein sequence, read N- to C-terminus: 6,7-dimethyl-8-ribityllumazine synthase (153 aa).

5-amino-6-(D-ribitylamino)uracil-binding positions include Phe22, 56–58, and 80–82; these read AFE and TVI. 85 to 86 contributes to the (2S)-2-hydroxy-3-oxobutyl phosphate binding site; it reads ST. His88 (proton donor) is an active-site residue. 5-amino-6-(D-ribitylamino)uracil is bound at residue Phe113. Residue Arg127 coordinates (2S)-2-hydroxy-3-oxobutyl phosphate.

It belongs to the DMRL synthase family. Forms an icosahedral capsid composed of 60 subunits, arranged as a dodecamer of pentamers.

The enzyme catalyses (2S)-2-hydroxy-3-oxobutyl phosphate + 5-amino-6-(D-ribitylamino)uracil = 6,7-dimethyl-8-(1-D-ribityl)lumazine + phosphate + 2 H2O + H(+). It functions in the pathway cofactor biosynthesis; riboflavin biosynthesis; riboflavin from 2-hydroxy-3-oxobutyl phosphate and 5-amino-6-(D-ribitylamino)uracil: step 1/2. In terms of biological role, catalyzes the formation of 6,7-dimethyl-8-ribityllumazine by condensation of 5-amino-6-(D-ribitylamino)uracil with 3,4-dihydroxy-2-butanone 4-phosphate. This is the penultimate step in the biosynthesis of riboflavin. The protein is 6,7-dimethyl-8-ribityllumazine synthase of Actinobacillus pleuropneumoniae serotype 3 (strain JL03).